Consider the following 283-residue polypeptide: Octanoyl-[GcvH]:protein N-octanoyltransferase (283 aa).

The BPL/LPL catalytic domain maps to 42–248 (GQSDAVVRTW…TLQSFGGELY (207 aa)). The active-site Acyl-thioester intermediate is cysteine 147.

This sequence belongs to the octanoyltransferase LipL family.

The enzyme catalyses N(6)-octanoyl-L-lysyl-[glycine-cleavage complex H protein] + L-lysyl-[lipoyl-carrier protein] = N(6)-octanoyl-L-lysyl-[lipoyl-carrier protein] + L-lysyl-[glycine-cleavage complex H protein]. Its pathway is protein modification; protein lipoylation via endogenous pathway; protein N(6)-(lipoyl)lysine from octanoyl-[acyl-carrier-protein]. Catalyzes the amidotransfer (transamidation) of the octanoyl moiety from octanoyl-GcvH to the lipoyl domain of the E2 subunit of lipoate-dependent enzymes. The sequence is that of Octanoyl-[GcvH]:protein N-octanoyltransferase from Geobacillus kaustophilus (strain HTA426).